The primary structure comprises 161 residues: DNA-directed RNA polymerase III subunit RPC9 (161 aa).

Positions 75 to 96 (QEDEGEERESSGAKDAEKSGIS) are disordered. Positions 82–96 (RESSGAKDAEKSGIS) are enriched in basic and acidic residues.

Belongs to the eukaryotic RPC9 RNA polymerase subunit family. In terms of assembly, component of the RNA polymerase III (Pol III) complex consisting of 17 subunits. Forms a Pol III subcomplex with RPC25/RPC8. Interacts with BURF1/TDS4.

It is found in the nucleus. DNA-dependent RNA polymerase catalyzes the transcription of DNA into RNA using the four ribonucleoside triphosphates as substrates. Specific peripheric component of RNA polymerase III which synthesizes small RNAs, such as 5S rRNA and tRNAs. The RPC25/RPC8-RPC17/RPC9 subcomplex may bind Pol III transcripts emerging from the adjacent exit pore during elongation. The polypeptide is DNA-directed RNA polymerase III subunit RPC9 (RPC17) (Saccharomyces cerevisiae (strain ATCC 204508 / S288c) (Baker's yeast)).